The chain runs to 536 residues: Small conductance calcium-activated potassium channel protein 1 (536 aa).

Residues 1–90 (MSSRSHNGSV…KPPTVSHRLG (90 aa)) form a disordered region. Residues 65–75 (QEEEEEEEDED) are compositionally biased toward acidic residues. Residues 107–127 (LIFGMFGIVVMVTETELSWGV) form a helical membrane-spanning segment. Residues 136-156 (FALKCLISLSTVILLGLVILY) form a helical membrane-spanning segment. The chain crosses the membrane as a helical span at residues 224–244 (VLLSIPMFLRLYLLARVMLLH). A helical transmembrane segment spans residues 273–293 (LMTICPGTVLLVFSISSWIVA). A helical transmembrane segment spans residues 313 to 333 (FLGAMWLISITFLSIGYGDMV). The pore-forming intramembrane region spans 342-362 (VCLLTGIMGAGCTALVVAVVA). Residues 380–459 (DTQLTKRVKN…LADLAKAQSI (80 aa)) are calmodulin-binding. The helical transmembrane segment at 487–507 (VLGASLQALPSLIAQAICPLP) threads the bilayer. Residues 514-536 (SHLTTAAQSPQSHWLPTTASDCG) are disordered. Residues 515–536 (HLTTAAQSPQSHWLPTTASDCG) are compositionally biased toward polar residues.

This sequence belongs to the potassium channel KCNN family. KCa2.1/KCNN1 subfamily. As to quaternary structure, homodimer. Heteromultimer with KCNN2 and KCNN3. The complex is composed of 4 channel subunits each of which binds to a calmodulin subunit which regulates the channel activity through calcium-binding. Interacts with calmodulin. In terms of tissue distribution, widely expressed including brain.

It localises to the membrane. The protein localises to the cytoplasm. The protein resides in the myofibril. Its subcellular location is the sarcomere. It is found in the z line. The catalysed reaction is K(+)(in) = K(+)(out). Its activity is regulated as follows. Inhibited by bee venom neurotoxin apamin. Inhibited by d-tubocurarine and tetraethylammonium (TEA). Its function is as follows. Small conductance calcium-activated potassium channel that mediates the voltage-independent transmembrane transfer of potassium across the cell membrane through a constitutive interaction with calmodulin which binds the intracellular calcium allowing its opening. The current is characterized by a voltage-independent activation, an intracellular calcium concentration increase-dependent activation and a single-channel conductance of about 3 picosiemens. Also presents an inwardly rectifying current, thus reducing its already small outward conductance of potassium ions, which is particularly the case when the membrane potential displays positive values, above + 20 mV. Activation is followed by membrane hyperpolarization. Thought to regulate neuronal excitability by contributing to the slow component of synaptic afterhyperpolarization. The sequence is that of Small conductance calcium-activated potassium channel protein 1 from Rattus norvegicus (Rat).